We begin with the raw amino-acid sequence, 905 residues long: Core protein VP3 (905 aa).

The protein belongs to the orbivirus VP3 family.

It localises to the virion. In terms of biological role, the VP3 protein is one of the five proteins (with VP1, VP4, VP6 and VP7) which form the inner capsid of the virus. The polypeptide is Core protein VP3 (Segment-3) (African horse sickness virus 6 (AHSV-6)).